The sequence spans 146 residues: Large-conductance mechanosensitive channel (146 aa).

2 helical membrane passes run 12 to 32 and 83 to 103; these read AFAM…GGAF and GNFL…FLFI.

The protein belongs to the MscL family. In terms of assembly, homopentamer.

It localises to the cell inner membrane. Functionally, channel that opens in response to stretch forces in the membrane lipid bilayer. May participate in the regulation of osmotic pressure changes within the cell. The polypeptide is Large-conductance mechanosensitive channel (Phocaeicola vulgatus (strain ATCC 8482 / DSM 1447 / JCM 5826 / CCUG 4940 / NBRC 14291 / NCTC 11154) (Bacteroides vulgatus)).